A 74-amino-acid chain; its full sequence is Conotoxin VnMEKL-0221 (74 aa).

The first 19 residues, 1–19 (MEKLTILLLVAAVLMWTQA), serve as a signal peptide directing secretion. The propeptide occupies 20–46 (LIQEKRPKEKIKFLSKRKTTAESWWEG). 3 disulfides stabilise this stretch: Cys-48-Cys-62, Cys-55-Cys-66, and Cys-61-Cys-71.

Belongs to the conotoxin O2 superfamily. As to expression, expressed by the venom duct.

The protein localises to the secreted. The sequence is that of Conotoxin VnMEKL-0221 from Conus ventricosus (Mediterranean cone).